The sequence spans 347 residues: Aromatic amino acid aminotransferase (347 aa).

Lys-214 carries the N6-(pyridoxal phosphate)lysine modification.

It belongs to the class-II pyridoxal-phosphate-dependent aminotransferase family. In terms of assembly, homodimer. Pyridoxal 5'-phosphate is required as a cofactor.

It catalyses the reaction an aromatic L-alpha-amino acid + 2-oxoglutarate = an aromatic oxo-acid + L-glutamate. Functionally, aminotransferase that catalyzes the conversion of aromatic amino acids and 2-oxoglutarate into corresponding aromatic oxo acids and L-glutamate. The polypeptide is Aromatic amino acid aminotransferase (Mycobacteroides abscessus (strain ATCC 19977 / DSM 44196 / CCUG 20993 / CIP 104536 / JCM 13569 / NCTC 13031 / TMC 1543 / L948) (Mycobacterium abscessus)).